Consider the following 572-residue polypeptide: Flagellin A (572 aa).

The protein belongs to the bacterial flagellin family. Heteromer of FlaA and FlaB. Interacts with FliW.

It is found in the secreted. The protein localises to the bacterial flagellum. Flagellin is the subunit protein which polymerizes to form the filaments of bacterial flagella. FlaA binds to flagellar assembly factor FliW protein, preventing FliW from binding to CsrA, so that CsrA can then bind flaA mRNA and represses its translation. This is Flagellin A (flaA) from Campylobacter jejuni subsp. jejuni serotype O:2 (strain ATCC 700819 / NCTC 11168).